Consider the following 481-residue polypeptide: Argininosuccinate lyase (481 aa).

This sequence belongs to the lyase 1 family. Argininosuccinate lyase subfamily.

Its subcellular location is the cytoplasm. The catalysed reaction is 2-(N(omega)-L-arginino)succinate = fumarate + L-arginine. The protein operates within amino-acid biosynthesis; L-arginine biosynthesis; L-arginine from L-ornithine and carbamoyl phosphate: step 3/3. This chain is Argininosuccinate lyase, found in Methanococcus maripaludis (strain DSM 14266 / JCM 13030 / NBRC 101832 / S2 / LL).